A 1906-amino-acid polypeptide reads, in one-letter code: Alpha-2-macroglobulin homolog (1906 aa).

Positions 1-21 (MIIRVCIRCFIVLTLVLGIGG) are cleaved as a signal peptide. Residue Cys-22 is the site of N-palmitoyl cysteine attachment. Cys-22 carries S-diacylglycerol cysteine lipidation.

Belongs to the protease inhibitor I39 (alpha-2-macroglobulin) family. Bacterial alpha-2-macroglobulin subfamily.

The protein localises to the cell membrane. In Nostoc sp. (strain PCC 7120 / SAG 25.82 / UTEX 2576), this protein is Alpha-2-macroglobulin homolog.